Reading from the N-terminus, the 180-residue chain is Large ribosomal subunit protein uL6 (180 aa).

Belongs to the universal ribosomal protein uL6 family. As to quaternary structure, part of the 50S ribosomal subunit.

Functionally, this protein binds to the 23S rRNA, and is important in its secondary structure. It is located near the subunit interface in the base of the L7/L12 stalk, and near the tRNA binding site of the peptidyltransferase center. This chain is Large ribosomal subunit protein uL6, found in Mesoplasma florum (strain ATCC 33453 / NBRC 100688 / NCTC 11704 / L1) (Acholeplasma florum).